Consider the following 915-residue polypeptide: Rab3 GTPase-activating protein catalytic subunit (915 aa).

Belongs to the Rab3-GAP catalytic subunit family. As to quaternary structure, the Rab3 GTPase-activating complex is a heterodimer composed of rbg-1 and rbg-2.

It is found in the cytoplasm. Its function is as follows. Probable catalytic subunit of a GTPase activating protein that has specificity for Rab3 subfamily. Rab3 proteins are involved in regulated exocytosis of neurotransmitters and hormones. Specifically converts active Rab3-GTP to the inactive form Rab3-GDP. The chain is Rab3 GTPase-activating protein catalytic subunit (rbg-1) from Caenorhabditis elegans.